We begin with the raw amino-acid sequence, 341 residues long: Aspartate--ammonia ligase (341 aa).

It belongs to the class-II aminoacyl-tRNA synthetase family. AsnA subfamily.

It localises to the cytoplasm. The catalysed reaction is L-aspartate + NH4(+) + ATP = L-asparagine + AMP + diphosphate + H(+). It functions in the pathway amino-acid biosynthesis; L-asparagine biosynthesis; L-asparagine from L-aspartate (ammonia route): step 1/1. The chain is Aspartate--ammonia ligase from Clostridium tetani (strain Massachusetts / E88).